Reading from the N-terminus, the 116-residue chain is UPF0102 protein IL0423 (116 aa).

Belongs to the UPF0102 family.

In Idiomarina loihiensis (strain ATCC BAA-735 / DSM 15497 / L2-TR), this protein is UPF0102 protein IL0423.